Reading from the N-terminus, the 599-residue chain is Serine/threonine-protein kinase Nek1 (599 aa).

Residues 4–258 (YEVLEQIGKG…AAELLKHPHL (255 aa)) form the Protein kinase domain. ATP is bound by residues 10 to 18 (IGKGAFGSA) and lysine 33. The active-site Proton acceptor is the aspartate 129. Disordered stretches follow at residues 364 to 386 (SIVKTPKRTPSKTITTPQLEPPK), 461 to 482 (SEDPPFLKLHGRRSPTPTPQHC), and 504 to 542 (DDDDGRSDSSSGRNNAAAAASSRAGSSESTRQRRFDTSS). Residues 511-530 (DSSSGRNNAAAAASSRAGSS) are compositionally biased toward low complexity.

Belongs to the protein kinase superfamily. NEK Ser/Thr protein kinase family. NIMA subfamily. As to expression, expressed in anthers, pistils and leaves.

The catalysed reaction is L-seryl-[protein] + ATP = O-phospho-L-seryl-[protein] + ADP + H(+). The enzyme catalyses L-threonyl-[protein] + ATP = O-phospho-L-threonyl-[protein] + ADP + H(+). May be involved in plant development processes. The polypeptide is Serine/threonine-protein kinase Nek1 (Oryza sativa subsp. japonica (Rice)).